Here is a 199-residue protein sequence, read N- to C-terminus: Potassium-transporting ATPase KdpC subunit (199 aa).

The chain crosses the membrane as a helical span at residues 7 to 27 (PALVMTAALCLITGIIYPGLI).

This sequence belongs to the KdpC family. In terms of assembly, the system is composed of three essential subunits: KdpA, KdpB and KdpC.

The protein resides in the cell inner membrane. Part of the high-affinity ATP-driven potassium transport (or Kdp) system, which catalyzes the hydrolysis of ATP coupled with the electrogenic transport of potassium into the cytoplasm. This subunit acts as a catalytic chaperone that increases the ATP-binding affinity of the ATP-hydrolyzing subunit KdpB by the formation of a transient KdpB/KdpC/ATP ternary complex. In Gemmatimonas aurantiaca (strain DSM 14586 / JCM 11422 / NBRC 100505 / T-27), this protein is Potassium-transporting ATPase KdpC subunit.